The chain runs to 691 residues: Elongation factor G (691 aa).

Residues 8–282 (EKTRNIGIMA…AVVDYLPSPV (275 aa)) form the tr-type G domain. Residues 17 to 24 (AHIDAGKT), 81 to 85 (DTPGH), and 135 to 138 (NKMD) each bind GTP.

The protein belongs to the TRAFAC class translation factor GTPase superfamily. Classic translation factor GTPase family. EF-G/EF-2 subfamily.

Its subcellular location is the cytoplasm. Catalyzes the GTP-dependent ribosomal translocation step during translation elongation. During this step, the ribosome changes from the pre-translocational (PRE) to the post-translocational (POST) state as the newly formed A-site-bound peptidyl-tRNA and P-site-bound deacylated tRNA move to the P and E sites, respectively. Catalyzes the coordinated movement of the two tRNA molecules, the mRNA and conformational changes in the ribosome. This chain is Elongation factor G, found in Caldicellulosiruptor bescii (strain ATCC BAA-1888 / DSM 6725 / KCTC 15123 / Z-1320) (Anaerocellum thermophilum).